A 112-amino-acid chain; its full sequence is Protein preY, mitochondrial (112 aa).

The N-terminal 34 residues, 1–34 (MLSATCRRLAPALRRLRALSAVAGRFLQVPGARL), are a transit peptide targeting the mitochondrion. Residues 49–95 (HPALLQFLVCPLSKKPLRYEASTNELVNEELGIAYPIIDGIPNMIPQ) enclose the TRM112 domain.

Belongs to the PREY family. In terms of assembly, interacts (via TRM112 domain) with NDUFAF5; the interaction is direct and stabilizes NDUFAF5 protein. Interacts with COQ5; the interaction is direct, stabilizes COQ5 protein and associates PYURF with COQ enzyme complex.

It localises to the mitochondrion. In terms of biological role, in mitochondria, S-adenosylmethionine-dependent methyltransferase chaperone that supports both coenzyme Q biosynthesis, by stabilizing its components, such as COQ5, and NADH:ubiquinone oxidoreductase complex (complex I, MT-ND1) assembly, by stabilizing complex I assembly factors, such as NDUFAF5. The protein is Protein preY, mitochondrial (Pyurf) of Mus musculus (Mouse).